The chain runs to 291 residues: 4-hydroxy-tetrahydrodipicolinate synthase (291 aa).

Threonine 42 is a binding site for pyruvate. The Proton donor/acceptor role is filled by tyrosine 129. The active-site Schiff-base intermediate with substrate is lysine 157. Isoleucine 198 provides a ligand contact to pyruvate.

It belongs to the DapA family. In terms of assembly, homotetramer; dimer of dimers.

The protein resides in the cytoplasm. It carries out the reaction L-aspartate 4-semialdehyde + pyruvate = (2S,4S)-4-hydroxy-2,3,4,5-tetrahydrodipicolinate + H2O + H(+). The protein operates within amino-acid biosynthesis; L-lysine biosynthesis via DAP pathway; (S)-tetrahydrodipicolinate from L-aspartate: step 3/4. In terms of biological role, catalyzes the condensation of (S)-aspartate-beta-semialdehyde [(S)-ASA] and pyruvate to 4-hydroxy-tetrahydrodipicolinate (HTPA). This Chlamydia pneumoniae (Chlamydophila pneumoniae) protein is 4-hydroxy-tetrahydrodipicolinate synthase.